Reading from the N-terminus, the 197-residue chain is Ubiquitin-conjugating enzyme E2 T (197 aa).

The UBC core domain maps to 2–152; it reads QRASRLKREL…ARQWTEKHAR (151 aa). The Glycyl thioester intermediate role is filled by Cys86. Glycyl lysine isopeptide (Lys-Gly) (interchain with G-Cter in ubiquitin) cross-links involve residues Lys91 and Lys182. Residues 149–197 are disordered; the sequence is KHARQKQKADEEEMLDNLPEAGDSRVHNSTQKRKASQLVGIEKKFHPDV. Ser184 is subject to Phosphoserine. Glycyl lysine isopeptide (Lys-Gly) (interchain with G-Cter in SUMO2) cross-links involve residues Lys191 and Lys192.

The protein belongs to the ubiquitin-conjugating enzyme family. Directly interacts with FANCL. Interacts with BRCA1. Post-translationally, auto-ubiquitinated. Effects of auto-monoubiquitination at Lys-91 and Lys-182 are unclear: according to a report, monoubiquitination inactivates E2 enzyme activity. In contrast, according to another report, autoubiquitination does not affect E2 enzyme activity.

It is found in the nucleus. It catalyses the reaction S-ubiquitinyl-[E1 ubiquitin-activating enzyme]-L-cysteine + [E2 ubiquitin-conjugating enzyme]-L-cysteine = [E1 ubiquitin-activating enzyme]-L-cysteine + S-ubiquitinyl-[E2 ubiquitin-conjugating enzyme]-L-cysteine.. It functions in the pathway protein modification; protein ubiquitination. Its function is as follows. Accepts ubiquitin from the E1 complex and catalyzes its covalent attachment to other proteins. Catalyzes monoubiquitination. Involved in mitomycin-C (MMC)-induced DNA repair. Acts as a specific E2 ubiquitin-conjugating enzyme for the Fanconi anemia complex by associating with E3 ubiquitin-protein ligase FANCL and catalyzing monoubiquitination of FANCD2, a key step in the DNA damage pathway. Also mediates monoubiquitination of FANCL and FANCI. May contribute to ubiquitination and degradation of BRCA1. In vitro able to promote polyubiquitination using all 7 ubiquitin Lys residues, but may prefer 'Lys-11'-, 'Lys-27'-, 'Lys-48'- and 'Lys-63'-linked polyubiquitination. The protein is Ubiquitin-conjugating enzyme E2 T (UBE2T) of Homo sapiens (Human).